The chain runs to 427 residues: Sialic acid TRAP transporter large permease protein SiaM (427 aa).

Helical transmembrane passes span 11-31, 52-72, 82-102, 140-160, 165-185, 214-234, 246-266, 270-290, 301-321, 322-342, 348-368, and 394-414; these read LLFAGMPVGFSLIFVALAFLI, FTLLAVPFFVLTGHLMNSAGI, SLVGHITGSLGHVNIMASLLF, ASCIIGPLVPPSVPLVIYGVV, IGALFLAGAIPGLLCCIALMV, AFLSLLTPVIIIGGIFSGKFT, ALFLGTVVYNTLTLQGFIEIL, VNTTAVVALMVMGVTVFGWIV, DYFLTISDNPLVLLLLINLLL, LFLGTFIESLALLLLLVPFLV, VGIDPVHFGVMAILNLMIGIL, and VLPLLVPLFIVLALVAVFPQF.

Belongs to the TRAP transporter large permease family. As to quaternary structure, the complex comprises the extracytoplasmic solute receptor protein SiaP, and the two transmembrane proteins SiaQ and SiaM. SiaQ and SiaM form a tight 1:1 complex.

The protein resides in the cell inner membrane. Part of the tripartite ATP-independent periplasmic (TRAP) transport system SiaPQM that catalyzes unidirectional Na(+)-dependent sialic acid uptake. The protein is Sialic acid TRAP transporter large permease protein SiaM of Vibrio cholerae serotype O1 (strain ATCC 39315 / El Tor Inaba N16961).